The sequence spans 321 residues: Anthranilate phosphoribosyltransferase (321 aa).

Residues glycine 72, 75–76, threonine 80, 82–85, 99–107, and serine 111 contribute to the 5-phospho-alpha-D-ribose 1-diphosphate site; these read GD, NVST, and KHGNVSITS. Glycine 72 is an anthranilate binding site. Serine 84 lines the Mg(2+) pocket. Residue asparagine 102 coordinates anthranilate. Arginine 157 contacts anthranilate. Mg(2+)-binding residues include aspartate 216 and glutamate 217.

This sequence belongs to the anthranilate phosphoribosyltransferase family. Homodimer. Requires Mg(2+) as cofactor.

It carries out the reaction N-(5-phospho-beta-D-ribosyl)anthranilate + diphosphate = 5-phospho-alpha-D-ribose 1-diphosphate + anthranilate. The protein operates within amino-acid biosynthesis; L-tryptophan biosynthesis; L-tryptophan from chorismate: step 2/5. Functionally, catalyzes the transfer of the phosphoribosyl group of 5-phosphorylribose-1-pyrophosphate (PRPP) to anthranilate to yield N-(5'-phosphoribosyl)-anthranilate (PRA). In Methanococcus maripaludis (strain C6 / ATCC BAA-1332), this protein is Anthranilate phosphoribosyltransferase.